A 112-amino-acid polypeptide reads, in one-letter code: Large ribosomal subunit protein eL30 (112 aa).

It belongs to the eukaryotic ribosomal protein eL30 family.

The chain is Large ribosomal subunit protein eL30 (RPL30) from Zea mays (Maize).